Reading from the N-terminus, the 691-residue chain is Methionine--tRNA ligase (691 aa).

The 'HIGH' region motif lies at proline 12 to histidine 22. Zn(2+)-binding residues include cysteine 143, cysteine 146, cysteine 156, and cysteine 159. A 'KMSKS' region motif is present at residues lysine 341–serine 345. Lysine 344 is an ATP binding site. Positions aspartate 585–histidine 691 constitute a tRNA-binding domain.

Belongs to the class-I aminoacyl-tRNA synthetase family. MetG type 1 subfamily. In terms of assembly, homodimer. Requires Zn(2+) as cofactor.

Its subcellular location is the cytoplasm. The catalysed reaction is tRNA(Met) + L-methionine + ATP = L-methionyl-tRNA(Met) + AMP + diphosphate. Its function is as follows. Is required not only for elongation of protein synthesis but also for the initiation of all mRNA translation through initiator tRNA(fMet) aminoacylation. The protein is Methionine--tRNA ligase of Bordetella avium (strain 197N).